We begin with the raw amino-acid sequence, 275 residues long: Dermonecrotic toxin SpeSicTox-betaIIA2i (275 aa).

His5 is an active-site residue. Glu25 and Asp27 together coordinate Mg(2+). His41 acts as the Nucleophile in catalysis. 2 cysteine pairs are disulfide-bonded: Cys45–Cys51 and Cys47–Cys190. Asp85 lines the Mg(2+) pocket.

It belongs to the arthropod phospholipase D family. Class II subfamily. The cofactor is Mg(2+). In terms of tissue distribution, expressed by the venom gland.

The protein localises to the secreted. It catalyses the reaction an N-(acyl)-sphingosylphosphocholine = an N-(acyl)-sphingosyl-1,3-cyclic phosphate + choline. The catalysed reaction is an N-(acyl)-sphingosylphosphoethanolamine = an N-(acyl)-sphingosyl-1,3-cyclic phosphate + ethanolamine. The enzyme catalyses a 1-acyl-sn-glycero-3-phosphocholine = a 1-acyl-sn-glycero-2,3-cyclic phosphate + choline. It carries out the reaction a 1-acyl-sn-glycero-3-phosphoethanolamine = a 1-acyl-sn-glycero-2,3-cyclic phosphate + ethanolamine. In terms of biological role, dermonecrotic toxins cleave the phosphodiester linkage between the phosphate and headgroup of certain phospholipids (sphingolipid and lysolipid substrates), forming an alcohol (often choline) and a cyclic phosphate. This toxin acts on sphingomyelin (SM). It may also act on ceramide phosphoethanolamine (CPE), lysophosphatidylcholine (LPC) and lysophosphatidylethanolamine (LPE), but not on lysophosphatidylserine (LPS), and lysophosphatidylglycerol (LPG). It acts by transphosphatidylation, releasing exclusively cyclic phosphate products as second products. Induces dermonecrosis, hemolysis, increased vascular permeability, edema, inflammatory response, and platelet aggregation. This is Dermonecrotic toxin SpeSicTox-betaIIA2i from Sicarius peruensis (Six-eyed sand spider).